A 303-amino-acid chain; its full sequence is Aliphatic sulfonates import ATP-binding protein SsuB (303 aa).

Positions Leu39–Leu263 constitute an ABC transporter domain. Gly71–Ser78 serves as a coordination point for ATP.

It belongs to the ABC transporter superfamily. Aliphatic sulfonates importer (TC 3.A.1.17.2) family. As to quaternary structure, the complex is composed of two ATP-binding proteins (SsuB), two transmembrane proteins (SsuC) and a solute-binding protein (SsuA).

It localises to the cell inner membrane. It carries out the reaction ATP + H2O + aliphatic sulfonate-[sulfonate-binding protein]Side 1 = ADP + phosphate + aliphatic sulfonateSide 2 + [sulfonate-binding protein]Side 1.. Its function is as follows. Part of the ABC transporter complex SsuABC involved in aliphatic sulfonates import. Responsible for energy coupling to the transport system. This is Aliphatic sulfonates import ATP-binding protein SsuB from Cupriavidus necator (strain ATCC 17699 / DSM 428 / KCTC 22496 / NCIMB 10442 / H16 / Stanier 337) (Ralstonia eutropha).